Reading from the N-terminus, the 89-residue chain is Small ribosomal subunit protein uS15 (89 aa).

It belongs to the universal ribosomal protein uS15 family. Part of the 30S ribosomal subunit. Forms a bridge to the 50S subunit in the 70S ribosome, contacting the 23S rRNA.

Functionally, one of the primary rRNA binding proteins, it binds directly to 16S rRNA where it helps nucleate assembly of the platform of the 30S subunit by binding and bridging several RNA helices of the 16S rRNA. Forms an intersubunit bridge (bridge B4) with the 23S rRNA of the 50S subunit in the ribosome. The chain is Small ribosomal subunit protein uS15 from Desulforudis audaxviator (strain MP104C).